A 110-amino-acid chain; its full sequence is UPF0060 membrane protein SACE_5620 (110 aa).

Helical transmembrane passes span 8 to 28, 34 to 54, 63 to 83, and 89 to 109; these read VVLFVLAAVAEIGGAWLVWQG, GLLWIGAGVIALGIYGFVATF, ILAAYGGVFVAGSLLWGVVVD, and RWDLIGATICLAGVAVIMYAP.

It belongs to the UPF0060 family.

The protein resides in the cell membrane. This Saccharopolyspora erythraea (strain ATCC 11635 / DSM 40517 / JCM 4748 / NBRC 13426 / NCIMB 8594 / NRRL 2338) protein is UPF0060 membrane protein SACE_5620.